A 136-amino-acid polypeptide reads, in one-letter code: Lymphocyte antigen 6E (136 aa).

An N-terminal signal peptide occupies residues 1-26 (MSATSNMRVFLPVLLAALLGMEQVHS). Residues 27 to 118 (LMCFSCTDQK…AGLGLRASIP (92 aa)) enclose the UPAR/Ly6 domain. 5 disulfide bridges follow: cysteine 29/cysteine 54, cysteine 32/cysteine 41, cysteine 47/cysteine 76, cysteine 80/cysteine 98, and cysteine 99/cysteine 104. An N-linked (GlcNAc...) asparagine glycan is attached at asparagine 105. Alanine 108 is lipidated: GPI-anchor amidated alanine. A propeptide spans 109–136 (AGLGLRASIPLLGLGLLLSLLALLQLSP) (removed in mature form).

As to quaternary structure, interacts with CHRNA4. Interacts with CD3Z/CD247. As to expression, ubiquitously expressed in mouse adult tissues with maximal expression in the lung and the salivary gland. Expression is strikingly lower in the fetal tissues except for the placenta. Present in thymus where its expression is observed in immature thymocytes and thymic stromal cells. Also found on functionally active T-cells as well as B-cells and thymic dendritic cells.

The protein localises to the cell membrane. Functionally, GPI-anchored cell surface protein that regulates T-lymphocytes proliferation, differentiation, and activation. Regulates the T-cell receptor (TCR) signaling by interacting with component CD3Z/CD247 at the plasma membrane, leading to CD3Z/CD247 phosphorylation modulation. Restricts the entry of murine coronavirus, mouse hepatitis virus, by interfering with spike protein-mediated membrane fusion. Also plays an essential role in placenta formation by acting as the main receptor for syncytin-A (SynA). Therefore, participates in the normal fusion of syncytiotrophoblast layer I (SynT-I) and in the proper morphogenesis of both fetal and maternal vasculatures within the placenta. May also act as a modulator of nicotinic acetylcholine receptors (nAChRs) activity. In vitro inhibits alpha-3:beta-4-containing nAChRs maximum response. The chain is Lymphocyte antigen 6E from Mus musculus (Mouse).